The primary structure comprises 376 residues: Chaperone protein DnaJ (376 aa).

Residues 5–70 (DYYEILGVSK…QKRAAYDQYG (66 aa)) enclose the J domain. The segment at 131-209 (GVTKEIRIPT…CHGHGRVERS (79 aa)) adopts a CR-type zinc-finger fold. Zn(2+) contacts are provided by Cys-144, Cys-147, Cys-161, Cys-164, Cys-183, Cys-186, Cys-197, and Cys-200. CXXCXGXG motif repeat units lie at residues 144–151 (CDVCHGSG), 161–168 (CPTCHGSG), 183–190 (CPHCQGRG), and 197–204 (CNKCHGHG).

Belongs to the DnaJ family. As to quaternary structure, homodimer. Zn(2+) is required as a cofactor.

The protein localises to the cytoplasm. Its function is as follows. Participates actively in the response to hyperosmotic and heat shock by preventing the aggregation of stress-denatured proteins and by disaggregating proteins, also in an autonomous, DnaK-independent fashion. Unfolded proteins bind initially to DnaJ; upon interaction with the DnaJ-bound protein, DnaK hydrolyzes its bound ATP, resulting in the formation of a stable complex. GrpE releases ADP from DnaK; ATP binding to DnaK triggers the release of the substrate protein, thus completing the reaction cycle. Several rounds of ATP-dependent interactions between DnaJ, DnaK and GrpE are required for fully efficient folding. Also involved, together with DnaK and GrpE, in the DNA replication of plasmids through activation of initiation proteins. This Escherichia coli O157:H7 (strain EC4115 / EHEC) protein is Chaperone protein DnaJ.